The chain runs to 160 residues: SsrA-binding protein (160 aa).

Residues 133-160 (GKKLHDKRDTEKERDWKREQQRLLRDRG) are disordered. Basic and acidic residues predominate over residues 138–160 (DKRDTEKERDWKREQQRLLRDRG).

This sequence belongs to the SmpB family.

The protein localises to the cytoplasm. Its function is as follows. Required for rescue of stalled ribosomes mediated by trans-translation. Binds to transfer-messenger RNA (tmRNA), required for stable association of tmRNA with ribosomes. tmRNA and SmpB together mimic tRNA shape, replacing the anticodon stem-loop with SmpB. tmRNA is encoded by the ssrA gene; the 2 termini fold to resemble tRNA(Ala) and it encodes a 'tag peptide', a short internal open reading frame. During trans-translation Ala-aminoacylated tmRNA acts like a tRNA, entering the A-site of stalled ribosomes, displacing the stalled mRNA. The ribosome then switches to translate the ORF on the tmRNA; the nascent peptide is terminated with the 'tag peptide' encoded by the tmRNA and targeted for degradation. The ribosome is freed to recommence translation, which seems to be the essential function of trans-translation. This chain is SsrA-binding protein, found in Rhizorhabdus wittichii (strain DSM 6014 / CCUG 31198 / JCM 15750 / NBRC 105917 / EY 4224 / RW1) (Sphingomonas wittichii).